An 84-amino-acid polypeptide reads, in one-letter code: Small ribosomal subunit protein bS16 (84 aa).

It belongs to the bacterial ribosomal protein bS16 family.

The sequence is that of Small ribosomal subunit protein bS16 from Paraburkholderia phymatum (strain DSM 17167 / CIP 108236 / LMG 21445 / STM815) (Burkholderia phymatum).